A 171-amino-acid chain; its full sequence is UPF0398 protein MGAS9429_Spy1349 (171 aa).

The protein belongs to the UPF0398 family.

The chain is UPF0398 protein MGAS9429_Spy1349 from Streptococcus pyogenes serotype M12 (strain MGAS9429).